The chain runs to 53 residues: ATP synthase protein 8 (53 aa).

The helical transmembrane segment at 10–30 (IMVFLVSMALLWAIMTMVFFL) threads the bilayer.

This sequence belongs to the ATPase protein 8 family. F-type ATPases have 2 components, CF(1) - the catalytic core - and CF(0) - the membrane proton channel.

The protein localises to the mitochondrion membrane. Functionally, mitochondrial membrane ATP synthase (F(1)F(0) ATP synthase or Complex V) produces ATP from ADP in the presence of a proton gradient across the membrane which is generated by electron transport complexes of the respiratory chain. F-type ATPases consist of two structural domains, F(1) - containing the extramembraneous catalytic core and F(0) - containing the membrane proton channel, linked together by a central stalk and a peripheral stalk. During catalysis, ATP synthesis in the catalytic domain of F(1) is coupled via a rotary mechanism of the central stalk subunits to proton translocation. Part of the complex F(0) domain. Minor subunit located with subunit a in the membrane. The sequence is that of ATP synthase protein 8 (MT-ATP8) from Artemia franciscana (Brine shrimp).